The primary structure comprises 366 residues: NADH-quinone oxidoreductase subunit D (366 aa).

The protein belongs to the complex I 49 kDa subunit family. NDH-1 is composed of 14 different subunits. Subunits NuoB, C, D, E, F, and G constitute the peripheral sector of the complex.

Its subcellular location is the cell membrane. The enzyme catalyses a quinone + NADH + 5 H(+)(in) = a quinol + NAD(+) + 4 H(+)(out). NDH-1 shuttles electrons from NADH, via FMN and iron-sulfur (Fe-S) centers, to quinones in the respiratory chain. The immediate electron acceptor for the enzyme in this species is believed to be a menaquinone. Couples the redox reaction to proton translocation (for every two electrons transferred, four hydrogen ions are translocated across the cytoplasmic membrane), and thus conserves the redox energy in a proton gradient. The sequence is that of NADH-quinone oxidoreductase subunit D from Desulforamulus reducens (strain ATCC BAA-1160 / DSM 100696 / MI-1) (Desulfotomaculum reducens).